The primary structure comprises 402 residues: 1-deoxy-D-xylulose 5-phosphate reductoisomerase (402 aa).

NADPH is bound by residues T10, G11, S12, I13, G36, R37, N38, and N124. K125 contributes to the 1-deoxy-D-xylulose 5-phosphate binding site. Position 126 (E126) interacts with NADPH. D150 is a Mn(2+) binding site. Residues S151, E152, S186, and H209 each contribute to the 1-deoxy-D-xylulose 5-phosphate site. Residue E152 coordinates Mn(2+). Residue G215 coordinates NADPH. Residues S222, N227, K228, and E231 each contribute to the 1-deoxy-D-xylulose 5-phosphate site. Residue E231 participates in Mn(2+) binding.

The protein belongs to the DXR family. Requires Mg(2+) as cofactor. It depends on Mn(2+) as a cofactor.

It catalyses the reaction 2-C-methyl-D-erythritol 4-phosphate + NADP(+) = 1-deoxy-D-xylulose 5-phosphate + NADPH + H(+). The protein operates within isoprenoid biosynthesis; isopentenyl diphosphate biosynthesis via DXP pathway; isopentenyl diphosphate from 1-deoxy-D-xylulose 5-phosphate: step 1/6. Its activity is regulated as follows. Inhibited by fosmidomycin. Its function is as follows. Catalyzes the NADPH-dependent rearrangement and reduction of 1-deoxy-D-xylulose-5-phosphate (DXP) to 2-C-methyl-D-erythritol 4-phosphate (MEP). The polypeptide is 1-deoxy-D-xylulose 5-phosphate reductoisomerase (Synechococcus sp. (strain ATCC 27144 / PCC 6301 / SAUG 1402/1) (Anacystis nidulans)).